A 694-amino-acid chain; its full sequence is N,N-dimethylglycine/sarcosine dehydrogenase (694 aa).

In the N-terminal section; belongs to the NADH:flavin oxidoreductase/NADH oxidase family. In terms of assembly, monomer. The purified enzyme exists in the form of a monomer, dimer or polymer under non-denaturing conditions, but only the monomeric protein exhibits enzyme activity. Requires FAD as cofactor. NAD(+) is required as a cofactor. NADP(+) serves as cofactor.

The protein resides in the cytoplasm. It catalyses the reaction oxidized 2[4Fe-4S]-[ferredoxin] + N,N-dimethylglycine + H2O = reduced 2[4Fe-4S]-[ferredoxin] + sarcosine + formaldehyde + 2 H(+). It carries out the reaction oxidized 2[4Fe-4S]-[ferredoxin] + sarcosine + H2O = reduced 2[4Fe-4S]-[ferredoxin] + formaldehyde + glycine + 2 H(+). Ca(2+) increases the activity by 12%, while the other metal ions tested have no or slightly inhibitory effects. The chelating agent EDTA inhibits the activity by 33%. In terms of biological role, involved in degradation of glycine betaine. Catalyzes the demethylation of both N,N-dimethylglycine (DMG) and sarcosine, releasing formaldehyde and forming glycine as the final product. Does not show activity toward trimethylamine (TMA), histamine, glycine betaine (GB) or choline. The C-N bond in DMG is probably oxidized by removal of a hydride equivalent to form a labile imine intermediate, which is then spontaneously hydrolyzed in the presence of water, producing sarcosine and formaldehyde. The two protons subtracted from DMG are transferred to the non-covalently bound FAD, resulting in the reduced form of FAD, which is subsequently reoxidized by coupling with reduction of the enzyme-bound NAD(P)(+). Regeneration of NAD(P)(+) is achieved by electron transfer to the [4Fe-4S] cluster in the probable membrane-anchored ferredoxin csal_0991. The chain is N,N-dimethylglycine/sarcosine dehydrogenase from Chromohalobacter salexigens (strain ATCC BAA-138 / DSM 3043 / CIP 106854 / NCIMB 13768 / 1H11).